Consider the following 149-residue polypeptide: SsrA-binding protein (149 aa).

It belongs to the SmpB family.

The protein localises to the cytoplasm. In terms of biological role, required for rescue of stalled ribosomes mediated by trans-translation. Binds to transfer-messenger RNA (tmRNA), required for stable association of tmRNA with ribosomes. tmRNA and SmpB together mimic tRNA shape, replacing the anticodon stem-loop with SmpB. tmRNA is encoded by the ssrA gene; the 2 termini fold to resemble tRNA(Ala) and it encodes a 'tag peptide', a short internal open reading frame. During trans-translation Ala-aminoacylated tmRNA acts like a tRNA, entering the A-site of stalled ribosomes, displacing the stalled mRNA. The ribosome then switches to translate the ORF on the tmRNA; the nascent peptide is terminated with the 'tag peptide' encoded by the tmRNA and targeted for degradation. The ribosome is freed to recommence translation, which seems to be the essential function of trans-translation. This Anaplasma marginale (strain St. Maries) protein is SsrA-binding protein.